A 271-amino-acid chain; its full sequence is Putative cysteine protease YopT-like blr2140 (271 aa).

Residues 1–81 (MYDRIGGSST…STSSPESPAT (81 aa)) form a disordered region. A compositionally biased stretch (polar residues) spans 7–29 (GSSTRTSQTDEPSQSVDSGSFTE). Positions 65–81 (TSSASEPSTSSPESPAT) are enriched in low complexity. Cys-100 is an active-site residue. A disordered region spans residues 114–136 (SPSTRMSALTPGSQTHASAAERQ). Catalysis depends on residues His-213 and Asp-228.

It belongs to the peptidase C58 family.

Its function is as follows. Potential cysteine protease, which may play a central role after invasion of host cell. The protein is Putative cysteine protease YopT-like blr2140 of Bradyrhizobium diazoefficiens (strain JCM 10833 / BCRC 13528 / IAM 13628 / NBRC 14792 / USDA 110).